The primary structure comprises 134 residues: Methylglyoxal synthase (134 aa).

Residues 1–134 (MHIALIAHDE…DWRDLRRNDE (134 aa)) enclose the MGS-like domain. Residues H8, K12, 34–37 (TGTT), and 54–55 (SG) each bind substrate. D60 serves as the catalytic Proton donor/acceptor. Substrate is bound at residue H87.

The protein belongs to the methylglyoxal synthase family.

The enzyme catalyses dihydroxyacetone phosphate = methylglyoxal + phosphate. Functionally, catalyzes the formation of methylglyoxal from dihydroxyacetone phosphate. The sequence is that of Methylglyoxal synthase from Listeria innocua serovar 6a (strain ATCC BAA-680 / CLIP 11262).